The primary structure comprises 565 residues: Putative ribonucleoside-diphosphate reductase large subunit (565 aa).

Substrate-binding positions include S60, 74-75 (SC), G103, 256-260 (NLCNE), and 400-404 (PNANS). C75 and C273 are joined by a disulfide. N256 serves as the catalytic Proton acceptor. The active-site Cysteine radical intermediate is the C258. The Proton acceptor role is filled by E260.

This sequence belongs to the ribonucleoside diphosphate reductase large chain family. As to quaternary structure, heterotetramer composed of a homodimer of the large subunit (R1) and a homodimer of the small subunit (R2). Larger multisubunit protein complex are also active, composed of (R1)n(R2)n.

It catalyses the reaction a 2'-deoxyribonucleoside 5'-diphosphate + [thioredoxin]-disulfide + H2O = a ribonucleoside 5'-diphosphate + [thioredoxin]-dithiol. Under complex allosteric control mediated by deoxynucleoside triphosphates and ATP binding. The type of nucleotide bound at the specificity site determines substrate preference. It seems probable that ATP makes the enzyme reduce CDP and UDP, dGTP favors ADP reduction and dTTP favors GDP reduction. Ribonucleoside-diphosphate reductase holoenzyme provides the precursors necessary for viral DNA synthesis. Allows virus growth in non-dividing cells. Catalyzes the biosynthesis of deoxyribonucleotides from the corresponding ribonucleotides. This chain is Putative ribonucleoside-diphosphate reductase large subunit, found in Frog virus 3 (isolate Goorha) (FV-3).